The sequence spans 240 residues: Cell division protein FtsQ (240 aa).

At 1–7 (MTGPGLR) the chain is on the cytoplasmic side. A helical membrane pass occupies residues 8–28 (LLAGMGLAGALVLGLSLWLHF). The Periplasmic portion of the chain corresponds to 29–240 (DPDQHLPIGS…EADNDGGNAR (212 aa)). The POTRA domain maps to 34 to 102 (LPIGSIQITG…DTLEVHVTEP (69 aa)).

Belongs to the FtsQ/DivIB family. FtsQ subfamily. Part of a complex composed of FtsB, FtsL and FtsQ.

The protein localises to the cell inner membrane. Essential cell division protein. May link together the upstream cell division proteins, which are predominantly cytoplasmic, with the downstream cell division proteins, which are predominantly periplasmic. May control correct divisome assembly. In Thioalkalivibrio sp. (strain K90mix), this protein is Cell division protein FtsQ.